The chain runs to 120 residues: Large ribosomal subunit protein uL18 (120 aa).

The protein belongs to the universal ribosomal protein uL18 family. Part of the 50S ribosomal subunit; part of the 5S rRNA/L5/L18/L25 subcomplex. Contacts the 5S and 23S rRNAs.

Functionally, this is one of the proteins that bind and probably mediate the attachment of the 5S RNA into the large ribosomal subunit, where it forms part of the central protuberance. The protein is Large ribosomal subunit protein uL18 of Staphylococcus epidermidis (strain ATCC 35984 / DSM 28319 / BCRC 17069 / CCUG 31568 / BM 3577 / RP62A).